The following is a 237-amino-acid chain: Ribonuclease PH (237 aa).

Residues Arg86 and 124–126 (GTR) each bind phosphate.

The protein belongs to the RNase PH family. Homohexameric ring arranged as a trimer of dimers.

It catalyses the reaction tRNA(n+1) + phosphate = tRNA(n) + a ribonucleoside 5'-diphosphate. In terms of biological role, phosphorolytic 3'-5' exoribonuclease that plays an important role in tRNA 3'-end maturation. Removes nucleotide residues following the 3'-CCA terminus of tRNAs; can also add nucleotides to the ends of RNA molecules by using nucleoside diphosphates as substrates, but this may not be physiologically important. Probably plays a role in initiation of 16S rRNA degradation (leading to ribosome degradation) during starvation. The polypeptide is Ribonuclease PH (Shewanella baltica (strain OS223)).